The chain runs to 577 residues: Galectin-3-binding protein (577 aa).

Positions Met-1 to Gly-18 are cleaved as a signal peptide. One can recognise an SRCR domain in the interval Met-24–Ser-124. 3 cysteine pairs are disulfide-bonded: Cys-49–Cys-113, Cys-62–Cys-123, and Cys-93–Cys-103. An N-linked (GlcNAc...) asparagine glycan is attached at Asn-69. Asn-125 carries N-linked (GlcNAc...) asparagine glycosylation. A BTB domain is found at Cys-153–Met-221. The BACK domain occupies Pro-260–Gln-360. N-linked (GlcNAc...) asparagine glycans are attached at residues Asn-362, Asn-398, Asn-543, and Asn-572.

Homodimers and homomultimers. The multimers form ring-like structures with a diameter of 30-40 nm. Binds LGALS1 and LGALS3. Binds ITGB1, COL4A1, COL5A1, COL6A1, FN1 and NID. Interacts with PPIC (in vitro). The unglycosylated form interacts with PDE4DIP isoform 2/MMG8/SMYLE; this interaction may connect a pericentrosomal complex to the gamma-tubulin ring complex (gamma-TuRC) to promote microtubule assembly and acetylation. Post-translationally, N-glycosylated. As to expression, detected in embryo, liver, spleen, kidney, lung, heart, intestine, thymus and lymph node.

Its subcellular location is the secreted. The protein localises to the extracellular space. It is found in the extracellular matrix. In terms of biological role, promotes integrin-mediated cell adhesion. May stimulate host defense against viruses and tumor cells. This is Galectin-3-binding protein (Lgals3bp) from Mus musculus (Mouse).